The chain runs to 524 residues: Na(+)/H(+) antiporter NhaB (524 aa).

Transmembrane regions (helical) follow at residues 23 to 43, 44 to 64, 97 to 117, 120 to 140, 144 to 164, 203 to 223, 236 to 256, 304 to 324, 354 to 374, 392 to 412, 448 to 468, and 476 to 496; these read IAIL…PFYA, GWLL…CYPL, LLLI…LFVF, LLLN…AAAF, FLDA…FYGI, LLMH…VGEP, FVSF…CGIL, ALVG…VGLI, FTAL…QHLF, LFYL…VGTV, ATPN…APLI, and VWMA…CVIF.

The protein belongs to the NhaB Na(+)/H(+) (TC 2.A.34) antiporter family.

The protein resides in the cell inner membrane. The enzyme catalyses 2 Na(+)(in) + 3 H(+)(out) = 2 Na(+)(out) + 3 H(+)(in). Its function is as follows. Na(+)/H(+) antiporter that extrudes sodium in exchange for external protons. This chain is Na(+)/H(+) antiporter NhaB, found in Edwardsiella ictaluri (strain 93-146).